Consider the following 428-residue polypeptide: D-alanine--D-alanine ligase (428 aa).

One can recognise an ATP-grasp domain in the interval 205–424; the sequence is KVVLDAAGIP…YTELITRLIE (220 aa). 237 to 299 is an ATP binding site; it reads DAGLTYPLFV…EQGIDGREIE (63 aa). Residues Asp378, Glu391, and Asn393 each coordinate Mg(2+).

It belongs to the D-alanine--D-alanine ligase family. Mg(2+) is required as a cofactor. It depends on Mn(2+) as a cofactor.

It is found in the cytoplasm. It carries out the reaction 2 D-alanine + ATP = D-alanyl-D-alanine + ADP + phosphate + H(+). Its pathway is cell wall biogenesis; peptidoglycan biosynthesis. Its function is as follows. Cell wall formation. The sequence is that of D-alanine--D-alanine ligase from Bifidobacterium longum (strain NCC 2705).